A 37-amino-acid chain; its full sequence is Large ribosomal subunit protein bL36c (37 aa).

It belongs to the bacterial ribosomal protein bL36 family.

It is found in the plastid. The protein resides in the chloroplast. The sequence is that of Large ribosomal subunit protein bL36c from Gnetum parvifolium (Small-leaved jointfir).